Reading from the N-terminus, the 418-residue chain is Glutamyl-tRNA reductase (418 aa).

Substrate-binding positions include 49 to 52 (TCNR), Ser109, 114 to 116 (EPQ), and Gln120. Cys50 functions as the Nucleophile in the catalytic mechanism. Position 189–194 (189–194 (GAGETI)) interacts with NADP(+).

Belongs to the glutamyl-tRNA reductase family. In terms of assembly, homodimer.

The enzyme catalyses (S)-4-amino-5-oxopentanoate + tRNA(Glu) + NADP(+) = L-glutamyl-tRNA(Glu) + NADPH + H(+). The protein operates within porphyrin-containing compound metabolism; protoporphyrin-IX biosynthesis; 5-aminolevulinate from L-glutamyl-tRNA(Glu): step 1/2. Catalyzes the NADPH-dependent reduction of glutamyl-tRNA(Glu) to glutamate 1-semialdehyde (GSA). The protein is Glutamyl-tRNA reductase of Cronobacter sakazakii (strain ATCC BAA-894) (Enterobacter sakazakii).